The chain runs to 247 residues: 1-(5-phosphoribosyl)-5-[(5-phosphoribosylamino)methylideneamino] imidazole-4-carboxamide isomerase (247 aa).

Catalysis depends on Asp-8, which acts as the Proton acceptor. The Proton donor role is filled by Asp-131.

This sequence belongs to the HisA/HisF family.

The protein localises to the cytoplasm. The catalysed reaction is 1-(5-phospho-beta-D-ribosyl)-5-[(5-phospho-beta-D-ribosylamino)methylideneamino]imidazole-4-carboxamide = 5-[(5-phospho-1-deoxy-D-ribulos-1-ylimino)methylamino]-1-(5-phospho-beta-D-ribosyl)imidazole-4-carboxamide. It participates in amino-acid biosynthesis; L-histidine biosynthesis; L-histidine from 5-phospho-alpha-D-ribose 1-diphosphate: step 4/9. This is 1-(5-phosphoribosyl)-5-[(5-phosphoribosylamino)methylideneamino] imidazole-4-carboxamide isomerase from Acidovorax sp. (strain JS42).